The sequence spans 265 residues: Undecaprenyl-diphosphatase 1 (265 aa).

The next 7 membrane-spanning stretches (helical) occupy residues 4 to 24 (IIIAFILGIVEGLAEFLPISS), 42 to 62 (AKTFEIVIQLGAILAIAILYH), 84 to 104 (FHVFLGVFPAVVAGLLLHDVI), 108 to 128 (LFQPYTVVIGLVAGAILMILA), 184 to 204 (SEFSFLIALPVMVGATSLDLL), 217 to 237 (MFAVGFITSFIVAMLAVVTFL), and 245 to 265 (LKPFAYYRILLAILFTLFVLL).

Belongs to the UppP family.

It is found in the cell membrane. It carries out the reaction di-trans,octa-cis-undecaprenyl diphosphate + H2O = di-trans,octa-cis-undecaprenyl phosphate + phosphate + H(+). Functionally, catalyzes the dephosphorylation of undecaprenyl diphosphate (UPP). Confers resistance to bacitracin. The protein is Undecaprenyl-diphosphatase 1 of Bacillus cereus (strain ZK / E33L).